The following is a 706-amino-acid chain: Dual specificity calcium/calmodulin-dependent 3',5'-cyclic nucleotide phosphodiesterase 1C (706 aa).

Position 1 is an N-acetylmethionine (M1). The segment at 123–146 (EKPRFKSIVHAVQAGIFVERMYRR) is calmodulin-binding. One can recognise a PDEase domain in the interval 151 to 528 (VGLSYPPAVI…ERWRAKVPKE (378 aa)). H228 functions as the Proton donor in the catalytic mechanism. 4 residues coordinate Zn(2+): H232, H268, D269, and D376. Mg(2+) is bound at residue D269. Disordered stretches follow at residues 453–497 (LIDE…INNS) and 524–655 (KVPK…IKPP). 2 stretches are compositionally biased toward polar residues: residues 456-476 (ESSQ…INSS) and 483-497 (VKSS…INNS). Composition is skewed to basic and acidic residues over residues 524 to 554 (KVPK…EAKS), 580 to 597 (RKGD…KAGE), and 603 to 630 (DLKD…DGTK). Over residues 638–647 (APSTSSTSRI) the composition is skewed to polar residues.

Belongs to the cyclic nucleotide phosphodiesterase family. PDE1 subfamily. Homodimer. Zn(2+) serves as cofactor. Requires Mg(2+) as cofactor. Highly expressed in testis and at moderate levels in heart. In terms of tissue distribution, expressed at a moderate level in brain, the cerebellum, testis, heart and olfactory epithelium. As to expression, highly expressed in olfactory epithelium and at very low levels, if any, in other tissues. In the cochlea, expressed in the inner and outer hair cells (at protein level). In the brain, highly expressed in the neurons of the granule layer of the cerebellum, some Purkinje cells, the central amygdaloid nucleus, and the interpolar spinal trigem nucleus and, at moderate levels, in the glomerular and external plexiform layer of the olfactory bulb as well as in parts of the caudate-putamen and olfactory tubercle.

It localises to the lysosome. It carries out the reaction a nucleoside 3',5'-cyclic phosphate + H2O = a nucleoside 5'-phosphate + H(+). The catalysed reaction is 3',5'-cyclic GMP + H2O = GMP + H(+). The enzyme catalyses 3',5'-cyclic AMP + H2O = AMP + H(+). Its activity is regulated as follows. Type I PDE are activated by the binding of calmodulin in the presence of Ca(2+). Different splice variants may have different sensitivities to Ca(2+). Exhibits a higher sensitivity to Ca(2+) stimulation than isoforms 1 and 2. Calmodulin-dependent cyclic nucleotide phosphodiesterase with a dual specificity for cAMP and cGMP, which are key regulators of many important physiological processes. Exhibits high affinity for both cAMP and cGMP. Modulates the amplitude and duration of the cAMP signal in sensory cilia in response to odorant stimulation, hence contributing to the generation of action potentials. Regulates smooth muscle cell proliferation. Regulates the stability of growth factor receptors, including PDGFRB. The polypeptide is Dual specificity calcium/calmodulin-dependent 3',5'-cyclic nucleotide phosphodiesterase 1C (Mus musculus (Mouse)).